Reading from the N-terminus, the 101-residue chain is Large ribosomal subunit protein bL28 (101 aa).

It belongs to the bacterial ribosomal protein bL28 family.

This Methylorubrum extorquens (strain CM4 / NCIMB 13688) (Methylobacterium extorquens) protein is Large ribosomal subunit protein bL28.